We begin with the raw amino-acid sequence, 161 residues long: Lipoprotein signal peptidase (161 aa).

Transmembrane regions (helical) follow at residues 6-26, 67-87, and 90-110; these read ILFL…KFYV, GLFF…YLIK, and VSDL…MGNL. Residues aspartate 121 and aspartate 139 contribute to the active site. The helical transmembrane segment at 134–154 threads the bilayer; sequence AFNIADTAISIGVLFLVVDMI.

It belongs to the peptidase A8 family.

It is found in the cell inner membrane. The enzyme catalyses Release of signal peptides from bacterial membrane prolipoproteins. Hydrolyzes -Xaa-Yaa-Zaa-|-(S,diacylglyceryl)Cys-, in which Xaa is hydrophobic (preferably Leu), and Yaa (Ala or Ser) and Zaa (Gly or Ala) have small, neutral side chains.. The protein operates within protein modification; lipoprotein biosynthesis (signal peptide cleavage). This protein specifically catalyzes the removal of signal peptides from prolipoproteins. This is Lipoprotein signal peptidase from Syntrophus aciditrophicus (strain SB).